The primary structure comprises 291 residues: 4-hydroxy-tetrahydrodipicolinate synthase (291 aa).

Thr44 contributes to the pyruvate binding site. The Proton donor/acceptor role is filled by Tyr132. Lys160 serves as the catalytic Schiff-base intermediate with substrate. Ile202 lines the pyruvate pocket.

It belongs to the DapA family. As to quaternary structure, homotetramer; dimer of dimers.

The protein localises to the cytoplasm. It carries out the reaction L-aspartate 4-semialdehyde + pyruvate = (2S,4S)-4-hydroxy-2,3,4,5-tetrahydrodipicolinate + H2O + H(+). It participates in amino-acid biosynthesis; L-lysine biosynthesis via DAP pathway; (S)-tetrahydrodipicolinate from L-aspartate: step 3/4. In terms of biological role, catalyzes the condensation of (S)-aspartate-beta-semialdehyde [(S)-ASA] and pyruvate to 4-hydroxy-tetrahydrodipicolinate (HTPA). This chain is 4-hydroxy-tetrahydrodipicolinate synthase, found in Rhodospirillum centenum (strain ATCC 51521 / SW).